A 430-amino-acid chain; its full sequence is Adenylosuccinate synthetase (430 aa).

GTP-binding positions include 12–18 and 40–42; these read GDEGKGK and GHT. Residue aspartate 13 is the Proton acceptor of the active site. Mg(2+) is bound by residues aspartate 13 and glycine 40. IMP-binding positions include 13-16, 38-41, threonine 128, arginine 142, glutamine 223, threonine 238, and arginine 302; these read DEGK and NAGH. Histidine 41 functions as the Proton donor in the catalytic mechanism. Residue 298–304 coordinates substrate; the sequence is TTTGRPR. GTP is bound by residues arginine 304, 330–332, and 412–414; these read LLD and SVG.

The protein belongs to the adenylosuccinate synthetase family. Homodimer. Requires Mg(2+) as cofactor.

It is found in the cytoplasm. The catalysed reaction is IMP + L-aspartate + GTP = N(6)-(1,2-dicarboxyethyl)-AMP + GDP + phosphate + 2 H(+). The protein operates within purine metabolism; AMP biosynthesis via de novo pathway; AMP from IMP: step 1/2. In terms of biological role, plays an important role in the de novo pathway of purine nucleotide biosynthesis. Catalyzes the first committed step in the biosynthesis of AMP from IMP. This Listeria welshimeri serovar 6b (strain ATCC 35897 / DSM 20650 / CCUG 15529 / CIP 8149 / NCTC 11857 / SLCC 5334 / V8) protein is Adenylosuccinate synthetase.